We begin with the raw amino-acid sequence, 108 residues long: Putative lipid-binding protein AIR1B (108 aa).

Residues 1–23 form the signal peptide; it reads MAPRTSLALFVSLNLLFFTCTSA. Disulfide bonds link cysteine 28–cysteine 55, cysteine 35–cysteine 54, and cysteine 71–cysteine 107.

The protein belongs to the plant LTP family. PEARLI1 subfamily.

The protein localises to the secreted. This chain is Putative lipid-binding protein AIR1B (AIR1B), found in Arabidopsis thaliana (Mouse-ear cress).